Consider the following 268-residue polypeptide: Glucosamine-6-phosphate deaminase (268 aa).

Residue Asp-72 is the Proton acceptor; for enolization step of the active site. Asp-141 serves as the catalytic For ring-opening step. His-143 functions as the Proton acceptor; for ring-opening step in the catalytic mechanism. Residue Glu-148 is the For ring-opening step of the active site.

The protein belongs to the glucosamine/galactosamine-6-phosphate isomerase family. NagB subfamily. As to quaternary structure, homohexamer.

It catalyses the reaction alpha-D-glucosamine 6-phosphate + H2O = beta-D-fructose 6-phosphate + NH4(+). The protein operates within amino-sugar metabolism; N-acetylneuraminate degradation; D-fructose 6-phosphate from N-acetylneuraminate: step 5/5. With respect to regulation, allosterically activated by N-acetylglucosamine 6-phosphate (GlcNAc6P). Catalyzes the reversible isomerization-deamination of glucosamine 6-phosphate (GlcN6P) to form fructose 6-phosphate (Fru6P) and ammonium ion. The chain is Glucosamine-6-phosphate deaminase from Histophilus somni (strain 129Pt) (Haemophilus somnus).